The following is a 351-amino-acid chain: Minor outer capsid protein P9 (351 aa).

Residues 246–308 form a disordered region; the sequence is GVPAALPQPD…KAVPSGNVSA (63 aa). The segment covering 285 to 297 has biased composition (basic and acidic residues); it reads MIRKKVETSKDAP.

The protein belongs to the phytoreovirus minor outer capsid protein P9 family.

It is found in the virion. The protein localises to the host cytoplasm. In terms of biological role, minor outer capsid protein. This chain is Minor outer capsid protein P9, found in Rice dwarf virus (isolate O) (RDV).